The following is a 113-amino-acid chain: Small ribosomal subunit protein bS6 (113 aa).

The protein belongs to the bacterial ribosomal protein bS6 family.

Binds together with bS18 to 16S ribosomal RNA. This is Small ribosomal subunit protein bS6 from Vesicomyosocius okutanii subsp. Calyptogena okutanii (strain HA).